Here is a 422-residue protein sequence, read N- to C-terminus: Histidine--tRNA ligase (422 aa).

Belongs to the class-II aminoacyl-tRNA synthetase family. As to quaternary structure, homodimer.

Its subcellular location is the cytoplasm. The catalysed reaction is tRNA(His) + L-histidine + ATP = L-histidyl-tRNA(His) + AMP + diphosphate + H(+). This chain is Histidine--tRNA ligase, found in Syntrophomonas wolfei subsp. wolfei (strain DSM 2245B / Goettingen).